We begin with the raw amino-acid sequence, 160 residues long: Major strawberry allergen Fra a 1-2 (160 aa).

The protein belongs to the BetVI family. Monomer. Interacts with AP. Highly expressed in ripe red fruits. Expressed in roots and white fruits. Expressed at low levels in open flowers.

In terms of biological role, involved in the control of flavonoid biosynthesis in fruits, probably by binding directly to natural flavonoids. Binds the natural flavonoid myricetin with affinities in the low micromolar range. The sequence is that of Major strawberry allergen Fra a 1-2 from Fragaria ananassa (Strawberry).